A 666-amino-acid chain; its full sequence is tRNA 5-methylaminomethyl-2-thiouridine biosynthesis bifunctional protein MnmC (666 aa).

Residues methionine 1–glutamate 245 are tRNA (mnm(5)s(2)U34)-methyltransferase. The interval isoleucine 270–lysine 666 is FAD-dependent cmnm(5)s(2)U34 oxidoreductase.

The protein in the N-terminal section; belongs to the methyltransferase superfamily. tRNA (mnm(5)s(2)U34)-methyltransferase family. In the C-terminal section; belongs to the DAO family. FAD serves as cofactor.

The protein resides in the cytoplasm. The enzyme catalyses 5-aminomethyl-2-thiouridine(34) in tRNA + S-adenosyl-L-methionine = 5-methylaminomethyl-2-thiouridine(34) in tRNA + S-adenosyl-L-homocysteine + H(+). Catalyzes the last two steps in the biosynthesis of 5-methylaminomethyl-2-thiouridine (mnm(5)s(2)U) at the wobble position (U34) in tRNA. Catalyzes the FAD-dependent demodification of cmnm(5)s(2)U34 to nm(5)s(2)U34, followed by the transfer of a methyl group from S-adenosyl-L-methionine to nm(5)s(2)U34, to form mnm(5)s(2)U34. This chain is tRNA 5-methylaminomethyl-2-thiouridine biosynthesis bifunctional protein MnmC, found in Salmonella typhi.